We begin with the raw amino-acid sequence, 343 residues long: S-adenosylmethionine:tRNA ribosyltransferase-isomerase (343 aa).

Belongs to the QueA family. As to quaternary structure, monomer.

The protein resides in the cytoplasm. It carries out the reaction 7-aminomethyl-7-carbaguanosine(34) in tRNA + S-adenosyl-L-methionine = epoxyqueuosine(34) in tRNA + adenine + L-methionine + 2 H(+). Its pathway is tRNA modification; tRNA-queuosine biosynthesis. Transfers and isomerizes the ribose moiety from AdoMet to the 7-aminomethyl group of 7-deazaguanine (preQ1-tRNA) to give epoxyqueuosine (oQ-tRNA). This is S-adenosylmethionine:tRNA ribosyltransferase-isomerase from Geotalea uraniireducens (strain Rf4) (Geobacter uraniireducens).